An 878-amino-acid polypeptide reads, in one-letter code: DNA mismatch repair protein MutS (878 aa).

An ATP-binding site is contributed by 629-636 (GPNMAGKS).

This sequence belongs to the DNA mismatch repair MutS family.

This protein is involved in the repair of mismatches in DNA. It is possible that it carries out the mismatch recognition step. This protein has a weak ATPase activity. The sequence is that of DNA mismatch repair protein MutS from Roseobacter denitrificans (strain ATCC 33942 / OCh 114) (Erythrobacter sp. (strain OCh 114)).